We begin with the raw amino-acid sequence, 323 residues long: MKKRIFIGSSSEQLTILNEIVDLLGDDVECIPWTDAFALNKSGLDSLIKQTRLADYSILIATKDDLTKQRGESLTKPRDNVVFEFGLFLGAAGPEKCYLIAEEDTDLPTDLDGITVAKFTRNSGQYNSLDKIVESIRTHLVKIAEMSQLGLLPSTALAIGYYNSFIKRVCEEIHGSECVELEGKKIKVKSFRVDVVIPETLDDNGVGNFTTLYNKRYGLSKATTCTNPALLGTRGFPFHFKVDPPDANQESPVDIHLLDIPSTLSTIVESLKLYLPSNQVGQDFDMDYLEMRELENFAKVLKYLIGRNAATKGYVNVLTNVKL.

A TIR domain is found at 4-120 (RIFIGSSSEQ…LDGITVAKFT (117 aa)). E84 is an active-site residue. The STING domain stretch occupies residues 154–323 (STALAIGYYN…YVNVLTNVKL (170 aa)). S164, F165, R234, P237, D259, S262, and T263 together coordinate 3',3'-c-di-GMP.

It in the C-terminal section; belongs to the bacterial STING family. Forms homodimers which subsequently form filaments. In vitro in the presence of c-di-GMP forms filaments up to 300 nm in length with an ordered array of parallel-stacked subunits, where the TIR domains form one face of the filament and the STING domains form the other face. Antiparallel double-filament structures are also seen. 3'3'-cGAMP weakly induces filament formation, while 2'3'-cGAMP does not.

It catalyses the reaction NAD(+) + H2O = ADP-D-ribose + nicotinamide + H(+). Its activity is regulated as follows. NAD(+) hydrolase activity is strongly stimulated by c-di-GMP, weakly by 3'3'-cGAMP, very weakly by c-di-AMP and not at all by 2'3'-cGAMP. Self-association of TIR domains is required for NADase activity. In terms of biological role, effector protein of a CBASS antiviral system with NAD(+) hydrolase activity. CBASS (cyclic oligonucleotide-based antiphage signaling system) provides immunity against bacteriophage. The CD-NTase protein synthesizes cyclic nucleotides in response to infection; these serve as specific second messenger signals. The signals activate a diverse range of effectors, leading to bacterial cell death and thus abortive phage infection. A type I-D(GG) CBASS system. Upon activation by 3'3'-c-di-GMP forms filaments which hydrolyze NAD(+); filament formation is required for enzyme activation. Induction in an E.coli strain that synthesizes c-di-GMP leads to significant growth inhibition. Binds c-di-GMP and 3'3'-cGAMP (3'3'-cyclic GMP-AMP), but not c-di-AMP, 2'3'-cGAMP or cUMP-AMP. The chain is CD-NTase-associated protein 12 from Sphingobacterium faecium (strain DSM 11690 / JCM 21820 / NBRC 15299 / NCIMB 13408 / KS 0470).